Here is a 399-residue protein sequence, read N- to C-terminus: Tyrosine--tRNA ligase 2 (399 aa).

Residues Pro41–His50 carry the 'HIGH' region motif. Positions Lys225–Ser229 match the 'KMSKS' region motif. Lys228 lines the ATP pocket. The 63-residue stretch at Ile336–Val398 folds into the S4 RNA-binding domain.

It belongs to the class-I aminoacyl-tRNA synthetase family. TyrS type 2 subfamily. As to quaternary structure, homodimer.

It localises to the cytoplasm. The catalysed reaction is tRNA(Tyr) + L-tyrosine + ATP = L-tyrosyl-tRNA(Tyr) + AMP + diphosphate + H(+). In terms of biological role, catalyzes the attachment of tyrosine to tRNA(Tyr) in a two-step reaction: tyrosine is first activated by ATP to form Tyr-AMP and then transferred to the acceptor end of tRNA(Tyr). This Pseudoalteromonas translucida (strain TAC 125) protein is Tyrosine--tRNA ligase 2.